The following is a 1001-amino-acid chain: Serine/threonine-protein kinase TAO1 (1001 aa).

A Phosphoserine modification is found at Ser-9. A Protein kinase domain is found at 28–281 (FTDLREIGHG…SEELLKHMFV (254 aa)). Residues 34 to 42 (IGHGSFGAV) and Lys-57 each bind ATP. Catalysis depends on Asp-151, which acts as the Proton acceptor. Disordered regions lie at residues 324–380 (PAVE…DKSE) and 404–433 (ENYQEEGDPRTRASDPQSPPQVSRHKSHYR). The segment covering 350-370 (SNQSIPSMSISASSQSSSVNS) has biased composition (low complexity). A phosphoserine mark is found at Ser-421 and Ser-445. Positions 458–651 (SELREQMSGY…QTQKDLEHAM (194 aa)) form a coiled coil. The tract at residues 567–587 (KEELNENQSTPKKEKQEWLSK) is disordered. A compositionally biased stretch (basic and acidic residues) spans 577-587 (PKKEKQEWLSK). Thr-669 is subject to Phosphothreonine. Positions 754–877 (KAVLKRLKEE…LERQAREIEA (124 aa)) form a coiled coil. The interval 905-1001 (PGASSWSHNP…ISNGSHMSYT (97 aa)) is disordered. Residues 921-930 (HWGHPMGGTP) are compositionally biased toward low complexity. At Ser-965 the chain carries Phosphoserine. A compositionally biased stretch (polar residues) spans 975-1001 (GGRTEQGMSRSTSVTSQISNGSHMSYT).

It belongs to the protein kinase superfamily. STE Ser/Thr protein kinase family. STE20 subfamily. As to quaternary structure, self-associates. Interacts with MAP2K3. Interacts with SPRED1. Interacts with TESK1; the interaction inhibits TAOK1 kinase activity. Interacts with MAP3K7. Proteolytically processed by caspase-3 (CASP3). Post-translationally, autophosphorylated. Phosphorylated by ATM in response to DNA damage. Phosphorylated by LRRK2.

The protein resides in the cytoplasm. It carries out the reaction L-seryl-[protein] + ATP = O-phospho-L-seryl-[protein] + ADP + H(+). It catalyses the reaction L-threonyl-[protein] + ATP = O-phospho-L-threonyl-[protein] + ADP + H(+). With respect to regulation, serine/threonine-protein kinase activity is inhibited by SPRED1. Serine/threonine-protein kinase involved in various processes such as p38/MAPK14 stress-activated MAPK cascade, DNA damage response and regulation of cytoskeleton stability. Phosphorylates MAP2K3, MAP2K6 and MARK2. Acts as an activator of the p38/MAPK14 stress-activated MAPK cascade by mediating phosphorylation and subsequent activation of the upstream MAP2K3 and MAP2K6 kinases. Involved in G-protein coupled receptor signaling to p38/MAPK14. In response to DNA damage, involved in the G2/M transition DNA damage checkpoint by activating the p38/MAPK14 stress-activated MAPK cascade, probably by mediating phosphorylation of MAP2K3 and MAP2K6. Acts as a regulator of cytoskeleton stability by phosphorylating 'Thr-208' of MARK2, leading to activate MARK2 kinase activity and subsequent phosphorylation and detachment of MAPT/TAU from microtubules. Also acts as a regulator of apoptosis: regulates apoptotic morphological changes, including cell contraction, membrane blebbing and apoptotic bodies formation via activation of the MAPK8/JNK cascade. During fetal development, it plays an essential role in the regulation of neuronal differentiation and migration to the cortical plate. This is Serine/threonine-protein kinase TAO1 (Taok1) from Mus musculus (Mouse).